We begin with the raw amino-acid sequence, 85 residues long: Cell division topological specificity factor (85 aa).

This sequence belongs to the MinE family.

Prevents the cell division inhibition by proteins MinC and MinD at internal division sites while permitting inhibition at polar sites. This ensures cell division at the proper site by restricting the formation of a division septum at the midpoint of the long axis of the cell. The protein is Cell division topological specificity factor of Xanthomonas campestris pv. campestris (strain 8004).